We begin with the raw amino-acid sequence, 317 residues long: Taste receptor type 2 member 7 (317 aa).

Residues 1–9 (MTDKVQTTL) lie on the Extracellular side of the membrane. A helical transmembrane segment spans residues 10-30 (LFLAIGEFSVGILGNAFIGLV). The Cytoplasmic portion of the chain corresponds to 31–55 (NCMDWVKKRKIASIDLILTSLAISR). The helical transmembrane segment at 56-76 (ICLLCVILLDCFMLVLYPDVY) threads the bilayer. The Extracellular portion of the chain corresponds to 77–94 (ATGKQMRIIDFFWTLTNH). A helical membrane pass occupies residues 95–115 (LSIWFATCLSIYYFFKIANFF). The Cytoplasmic segment spans residues 116–128 (HPLFLWMKWRIDR). A helical membrane pass occupies residues 129–149 (VISWILLGCMVLSVFINLPAT). The Extracellular segment spans residues 150–187 (ENLNADFRRCVKAKRKTNLTWSCRVTKAQHASTKLFLN). A glycan (N-linked (GlcNAc...) asparagine) is linked at Asn167. The helical transmembrane segment at 188–208 (LVTLLPFSVCLVSFFLLILSL) threads the bilayer. Residues 209 to 235 (WRHIRRMQLSATGCRDPSTEAHVRALK) lie on the Cytoplasmic side of the membrane. Residues 236-256 (AVISFLFLFIAYYLSFLIATS) form a helical membrane-spanning segment. Residues 257–266 (SYFIPETELA) lie on the Extracellular side of the membrane. A helical transmembrane segment spans residues 267-287 (VIFGEFIALIYPSSHSFILIL). Residues 288-317 (GNNKLRRASLKVLWTVMSILKGRKFQQKQI) are Cytoplasmic-facing.

It belongs to the G-protein coupled receptor T2R family.

It localises to the membrane. Its function is as follows. Gustducin-coupled receptor implicated in the perception of bitter compounds in the oral cavity and the gastrointestinal tract. Signals through PLCB2 and the calcium-regulated cation channel TRPM5. In Papio hamadryas (Hamadryas baboon), this protein is Taste receptor type 2 member 7 (TAS2R7).